Reading from the N-terminus, the 229-residue chain is Potassium/proton antiporter CemA (229 aa).

A run of 4 helical transmembrane segments spans residues 7-27 (FTPL…SFSF), 114-134 (IISF…LVVL), 154-174 (ILLL…ELMI), and 189-209 (IISG…KYWI).

Belongs to the CemA family.

It is found in the plastid. It localises to the chloroplast inner membrane. The catalysed reaction is K(+)(in) + H(+)(out) = K(+)(out) + H(+)(in). Its function is as follows. Contributes to K(+)/H(+) antiport activity by supporting proton efflux to control proton extrusion and homeostasis in chloroplasts in a light-dependent manner to modulate photosynthesis. Prevents excessive induction of non-photochemical quenching (NPQ) under continuous-light conditions. Indirectly promotes efficient inorganic carbon uptake into chloroplasts. The protein is Potassium/proton antiporter CemA of Nandina domestica (Heavenly bamboo).